Here is a 260-residue protein sequence, read N- to C-terminus: Thrombin-like enzyme acutobin (260 aa).

Positions 1–18 (MVLIRVLANLLILQLSYA) are cleaved as a signal peptide. Positions 19–24 (QKSSEL) are excised as a propeptide. The Peptidase S1 domain maps to 25-251 (VIGGVECDIN…YNDWIRSITA (227 aa)). Intrachain disulfides connect C31–C165, C52–C68, C102–C258, C144–C212, C176–C191, and C202–C227. The Charge relay system role is filled by H67. 2 N-linked (GlcNAc...) asparagine glycosylation sites follow: N101 and N105. The Charge relay system role is filled by D112. N124 is a glycosylation site (N-linked (GlcNAc...) asparagine). The active-site Charge relay system is S206. A glycan (N-linked (GlcNAc...) asparagine) is linked at N253.

The protein belongs to the peptidase S1 family. Snake venom subfamily. As to quaternary structure, monomer. N-glycosylated. In terms of tissue distribution, expressed by the venom gland.

The protein localises to the secreted. Functionally, thrombin-like snake venom serine protease that coagulates human fibrinogen by hydrolysis of the alpha chains (FGA). In Deinagkistrodon acutus (Hundred-pace snake), this protein is Thrombin-like enzyme acutobin.